Consider the following 508-residue polypeptide: D-alanine--D-alanyl carrier protein ligase (508 aa).

152-153 (TS) serves as a coordination point for ATP. Aspartate 198 is a D-alanine binding site. 293–298 (NTYGPT) is an ATP binding site. Valine 302 provides a ligand contact to D-alanine. Residues aspartate 384, 396–399 (YRGR), and lysine 495 contribute to the ATP site. Lysine 495 serves as a coordination point for D-alanine.

It belongs to the ATP-dependent AMP-binding enzyme family. DltA subfamily.

The protein localises to the cytoplasm. It catalyses the reaction holo-[D-alanyl-carrier protein] + D-alanine + ATP = D-alanyl-[D-alanyl-carrier protein] + AMP + diphosphate. It participates in cell wall biogenesis; lipoteichoic acid biosynthesis. In terms of biological role, catalyzes the first step in the D-alanylation of lipoteichoic acid (LTA), the activation of D-alanine and its transfer onto the D-alanyl carrier protein (Dcp) DltC. In an ATP-dependent two-step reaction, forms a high energy D-alanyl-AMP intermediate, followed by transfer of the D-alanyl residue as a thiol ester to the phosphopantheinyl prosthetic group of the Dcp. D-alanylation of LTA plays an important role in modulating the properties of the cell wall in Gram-positive bacteria, influencing the net charge of the cell wall. The sequence is that of D-alanine--D-alanyl carrier protein ligase from Lactiplantibacillus plantarum (strain ATCC BAA-793 / NCIMB 8826 / WCFS1) (Lactobacillus plantarum).